Consider the following 251-residue polypeptide: Putative fatty acid elongase DDB_G0274669 (251 aa).

5 helical membrane passes run 51-71, 82-102, 135-155, 177-197, and 211-231; these read FQII…IKFL, FISI…CVGV, WSYI…IIVL, YITM…VLHV, and AFAA…KFFV.

This sequence belongs to the ELO family.

It is found in the membrane. It carries out the reaction a very-long-chain acyl-CoA + malonyl-CoA + H(+) = a very-long-chain 3-oxoacyl-CoA + CO2 + CoA. Functionally, could be implicated in synthesis of very long chain fatty acids. In Dictyostelium discoideum (Social amoeba), this protein is Putative fatty acid elongase DDB_G0274669.